We begin with the raw amino-acid sequence, 479 residues long: Cardiolipin synthase A (479 aa).

The next 2 membrane-spanning stretches (helical) occupy residues 8-28 (FFGY…IHAL) and 38-58 (IAWA…YLVF). PLD phosphodiesterase domains lie at 218 to 245 (INFR…GDEY) and 392 to 419 (EPGF…DNRS). Active-site residues include His223, Lys225, Asp230, His397, Lys399, and Asp404.

It belongs to the phospholipase D family. Cardiolipin synthase subfamily. ClsA sub-subfamily.

It localises to the cell inner membrane. The enzyme catalyses 2 a 1,2-diacyl-sn-glycero-3-phospho-(1'-sn-glycerol) = a cardiolipin + glycerol. Functionally, catalyzes the reversible phosphatidyl group transfer from one phosphatidylglycerol molecule to another to form cardiolipin (CL) (diphosphatidylglycerol) and glycerol. The polypeptide is Cardiolipin synthase A (Pseudomonas syringae pv. syringae (strain B728a)).